The chain runs to 587 residues: Ran GTPase-activating protein 1 (587 aa).

A2 bears the N-acetylalanine mark. K8 is covalently cross-linked (Glycyl lysine isopeptide (Lys-Gly) (interchain with G-Cter in SUMO1); alternate). A Glycyl lysine isopeptide (Lys-Gly) (interchain with G-Cter in SUMO2); alternate cross-link involves residue K8. A Glycyl lysine isopeptide (Lys-Gly) (interchain with G-Cter in SUMO2) cross-link involves residue K15. The residue at position 24 (S24) is a Phosphoserine. 4 LRR repeats span residues 48-71 (FDSL…VIAK), 111-134 (GAQL…GFEA), 207-230 (IGTL…ALAQ), and 235-258 (NPLL…AMAE). K279 is covalently cross-linked (Glycyl lysine isopeptide (Lys-Gly) (interchain with G-Cter in SUMO2)). 2 LRR repeats span residues 292–319 (LPKL…AMAD) and 320–343 (KAEL…QLQE). Position 301 is a phosphoserine (S301). Positions 357-430 (LSDDEDEEEE…EPAPVLSSPP (74 aa)) are disordered. S358 carries the post-translational modification Phosphoserine. Acidic residues predominate over residues 358 to 397 (SDDEDEEEEEEGEEEEEEAEEEEEEDEEEEEEEEEEEEEE). The span at 400-410 (QRGQGEKSATP) shows a compositional bias: polar residues. T409 is subject to Phosphothreonine; by CDK2. Phosphoserine is present on residues S428 and S435. A Phosphothreonine modification is found at T436. Position 442 is a phosphoserine (S442). K452 is covalently cross-linked (Glycyl lysine isopeptide (Lys-Gly) (interchain with G-Cter in SUMO2)). The short motif at 523–526 (LKSE) is the SUMO conjugation element. K524 is covalently cross-linked (Glycyl lysine isopeptide (Lys-Gly) (interchain with G-Cter in SUMO1); alternate). A Glycyl lysine isopeptide (Lys-Gly) (interchain with G-Cter in SUMO2); alternate cross-link involves residue K524. Position 524 is an N6-acetyllysine; alternate (K524). K586 participates in a covalent cross-link: Glycyl lysine isopeptide (Lys-Gly) (interchain with G-Cter in SUMO2).

This sequence belongs to the RNA1 family. Homodimer. Interacts with RAN. Forms a complex with RANBP2/NUP358, NXF1 and NXT1. Forms a tight complex in association with RANBP2/NUP358 and UBE2I/UBC9, the ubiquitin-conjugating enzyme E2. Interacts with UBE2I; the interaction conjugates SUMO1 to RANGAP1, and subsequently stabilizes interactions of sumoylated RANGAP1 with RANBP2/NUP358. The complex composed of RANBP2, SUMO1, RANGAP1 and UBE2I associates with nuclear pore complexes. Identified in a complex composed of RAN, RANBP2, sumoylated RANGAP1, UBE2I and XPO1. Identified in a complex composed of RAN, RANGAP1 and RANBP1. Interacts with TRAF6. Interacts with SUMO1 and SENP1. Interacts (when sumoylated) with MYCBP2; interaction inhibits MYCBP2 E3 ubiquitin-protein ligase activity and promotes MYCBP2 translocation to the nucleus. Post-translationally, phosphorylation occurs before nuclear envelope breakdown and continues throughout mitosis. Phosphorylated by the M-phase kinase cyclin B/Cdk1, in vitro. Differential timimg of dephosphorylation occurs during phases of mitosis. The phosphorylated form remains associated with RANBP2/NUP358 and the SUMO E2-conjugating enzyme, UBE2I, on nuclear pore complex (NPC) diassembly and during mitosis. Sumoylated. Sumoylation is necessary for targeting to the nuclear envelope (NE), and for association with mitotic spindles and kinetochores during mitosis. Also required for interaction with RANBP2 and is mediated by UBE2I. Desumoylated by HINT1. In terms of tissue distribution, highly expressed in brain, thymus and testis.

It is found in the cytoplasm. The protein resides in the nucleus. Its subcellular location is the nucleoplasm. The protein localises to the nucleus envelope. It localises to the chromosome. It is found in the centromere. The protein resides in the kinetochore. Its subcellular location is the cytoskeleton. The protein localises to the spindle. GTPase activator for RAN. Converts cytoplasmic GTP-bound RAN to GDP-bound RAN, which is essential for RAN-mediated nuclear import and export. Mediates dissociation of cargo from nuclear export complexes containing XPO1, RAN and RANBP2 after nuclear export. In Homo sapiens (Human), this protein is Ran GTPase-activating protein 1 (RANGAP1).